The sequence spans 83 residues: Exodeoxyribonuclease 7 small subunit (83 aa).

This sequence belongs to the XseB family. As to quaternary structure, heterooligomer composed of large and small subunits.

It is found in the cytoplasm. The enzyme catalyses Exonucleolytic cleavage in either 5'- to 3'- or 3'- to 5'-direction to yield nucleoside 5'-phosphates.. Its function is as follows. Bidirectionally degrades single-stranded DNA into large acid-insoluble oligonucleotides, which are then degraded further into small acid-soluble oligonucleotides. The polypeptide is Exodeoxyribonuclease 7 small subunit (Heliobacterium modesticaldum (strain ATCC 51547 / Ice1)).